The sequence spans 262 residues: MSVVHKACLIALLFVSSGVAQQCMDSASDCAANAGSCFTRPVSQVLQNRCQRTCNTCDCRDEANNCAASINLCQNPTFEPLVRDRCQKTCGLCAGCGFISSGIVPLVVTSAPSRRVSVTFANNVQVNCGNTLTTAQVANQPTVTWEAQPNDRYTLIMVDPDFPSAANGQQGQRLHWWVINIPGNNIAGGTTLAAFQPSTPAANTGVHRYVFLVYRQPAAINSPLLNNLVVQDSERPGFGTTAFATQFNLGSPYAGNFYRSQA.

An N-terminal signal peptide occupies residues 1-21 (MSVVHKACLIALLFVSSGVAQ). ShKT domains follow at residues 23-57 (CMDS…CNTC) and 59-93 (CRDE…CGLC). Disulfide bonds link C23–C57, C30–C50, C37–C54, C59–C93, C66–C86, and C73–C90.

The protein belongs to the phosphatidylethanolamine-binding protein family.

The protein resides in the secreted. Its function is as follows. Binds phosphatidylethanolamine. The protein is 26 kDa secreted antigen (TES-26) of Toxocara canis (Canine roundworm).